Reading from the N-terminus, the 893-residue chain is Sperm-associated antigen 1 (893 aa).

Residues 112 to 126 (ENTRHFHDPEKHPGV) are compositionally biased toward basic and acidic residues. Residues 112-155 (ENTRHFHDPEKHPGVEDPLPPVRGSNSCPRGGKETSSKSKTAKK) form a disordered region. TPR repeat units lie at residues 213–246 (ANRE…LPTA), 247–279 (TAYN…EPGN), and 280–313 (IKAL…EPDN). Disordered stretches follow at residues 324–344 (EREL…KRMV), 349–368 (ENSG…DDGV), and 373–437 (MGNI…SRGN). Ser351 is modified (phosphoserine). Residues 403–415 (QEGQPETGTASTS) are compositionally biased toward polar residues. A compositionally biased stretch (basic and acidic residues) spans 416–437 (DNHDLEERRAADSPGDLKSRGN). TPR repeat units follow at residues 429–463 (PGDL…EPTG), 471–504 (SILY…QPFA), 506–538 (KPLL…DCRI), 605–638 (FQAL…NSKA), and 639–672 (CAIY…DSKN). 630–637 (ECLKINSK) provides a ligand contact to GTP. The residue at position 703 (Ser703) is a Phosphoserine. Residues 704-756 (PDSSEAARHLDTKNDTAPPSRERERRRIEIQEVDDSSDEEPERPAEASAVEEG) form a disordered region. Basic and acidic residues predominate over residues 708-733 (EAARHLDTKNDTAPPSRERERRRIEI). Residues 734–744 (QEVDDSSDEEP) are compositionally biased toward acidic residues. A phosphoserine mark is found at Ser739, Ser740, and Ser758.

Testis and sperm.

Its subcellular location is the cytoplasm. It localises to the dynein axonemal particle. May play a role in the cytoplasmic assembly of the ciliary dynein arms. Binds GTP and has GTPase activity. Plays a role in fertilization. The sequence is that of Sperm-associated antigen 1 (Spag1) from Rattus norvegicus (Rat).